A 651-amino-acid chain; its full sequence is Meiotic expression up-regulated protein 6 (651 aa).

Composition is skewed to basic and acidic residues over residues 1–12 (MSYEGREERPEQ) and 21–30 (VSEHNEHDSG). The disordered stretch occupies residues 1 to 102 (MSYEGREERP…EKKSKKKAKD (102 aa)). The segment covering 72–83 (TVDNIDPADDDP) has biased composition (acidic residues). Residues 90 to 102 (KVEEKKSKKKAKD) show a composition bias toward basic and acidic residues. The PH domain maps to 194–261 (CRGLLFYSKS…WITDLKNAIA (68 aa)). 3 disordered regions span residues 365 to 430 (TVEA…GTPI), 468 to 514 (VATP…KGGN), and 587 to 630 (TIKP…QMPQ). 2 stretches are compositionally biased toward polar residues: residues 410-429 (ESTS…NGTP) and 478-490 (PSTA…SVVS). The span at 497–514 (KKAGKKHHRHHKKKKGGN) shows a compositional bias: basic residues. The span at 587-604 (TIKPETPLTPTTTPTPRT) shows a compositional bias: low complexity.

This Schizosaccharomyces pombe (strain 972 / ATCC 24843) (Fission yeast) protein is Meiotic expression up-regulated protein 6 (meu6).